We begin with the raw amino-acid sequence, 147 residues long: Leghemoglobin 3 (147 aa).

Positions 2 to 147 constitute a Globin domain; it reads GFTAQQEALV…LATAIKKAMG (146 aa). Tyr30 is subject to Nitrated tyrosine. Ser45 contacts heme b. Ser45 bears the Phosphoserine mark. His61 lines the O2 pocket. Residues Lys64, His93, and Lys96 each coordinate heme b. The residue at position 135 (Tyr135) is a Nitrated tyrosine.

It belongs to the plant globin family. In terms of assembly, monomer. In terms of processing, nitrated in effective nodules and particularly in hypoxic conditions; this mechanism may play a protective role in the symbiosis by buffering toxic peroxynitrite NO(2)(-). Nitration level decrease during nodule senescence. Phosphorylation at Ser-45 disrupts the molecular environment of its porphyrin ring oxygen binding pocket, thus leading to a reduced oxygen consumption and to the delivery of oxygen O(2) to symbiosomes. In terms of tissue distribution, specifically and strongly expressed in root nodules and at low levels in seedlings.

The protein resides in the cytoplasm. Its subcellular location is the cytosol. It is found in the nucleus. Leghemoglobin that reversibly binds oxygen O(2) through a pentacoordinated heme iron. In root nodules, facilitates the diffusion of oxygen to the bacteroids while preventing the bacterial nitrogenase from being inactivated by buffering dioxygen, nitric oxide and carbon monoxide, and promoting the formation of reactive oxygen species (ROS, e.g. H(2)O(2)). This role is essential for symbiotic nitrogen fixation (SNF). This chain is Leghemoglobin 3, found in Lotus japonicus (Lotus corniculatus var. japonicus).